The sequence spans 142 residues: Type II secretion system core protein G (142 aa).

The propeptide at 1 to 8 (MQRRQQSG) is leader sequence. Residue F9 is modified to N-methylphenylalanine. A helical transmembrane segment spans residues 9–29 (FTLIEIMVVVVILGILAALVV). The tract at residues 121–142 (SLGADGKEGGSDNDADIGNWDN) is disordered.

This sequence belongs to the GSP G family. As to quaternary structure, type II secretion system is composed of four main components: the outer membrane complex, the inner membrane complex, the cytoplasmic secretion ATPase and the periplasm-spanning pseudopilus. Forms homomultimers. Interacts with pseudopilin tip ternary complex made of XcpX, XcpU, XcpV and XcpW. Interacts with PilA. In terms of processing, cleaved by the prepilin peptidase. Methylated by prepilin peptidase at the amino group of the N-terminal phenylalanine once the leader sequence is cleaved.

Its subcellular location is the cell inner membrane. Core component of the type II secretion system required for the energy-dependent secretion of extracellular factors such as proteases and toxins from the periplasm. Pseudopilin (pilin-like) protein that polymerizes to form the pseudopilus. Further polymerization triggers pseudopilus growth. Type II pseudopilus confers increased bacterial adhesive capabilities. This chain is Type II secretion system core protein G (xcpT), found in Pseudomonas aeruginosa (strain ATCC 15692 / DSM 22644 / CIP 104116 / JCM 14847 / LMG 12228 / 1C / PRS 101 / PAO1).